The sequence spans 251 residues: Long tail fiber protein Gp37 (251 aa).

An interaction with the receptor-recognizing protein gp38 region spans residues D134–I137. Positions S139–F237 constitute a Peptidase S74 domain.

The protein belongs to the S16-like long tail fiber protein Gp37 family. As to quaternary structure, homotrimer. Interacts with the receptor-recognizing protein Gp38. Post-translationally, proteolytic cleavage and release of the chaperone in the host cytosol stabilizes the folded protein.

The protein resides in the virion. Its function is as follows. Constitues the trimeric tip of the long tail fiber that mediates the attachment to the host receptor, together with the receptor-recognizing protein Gp38. The C-terminal chaperone protein mediates homotrimerization and proper folding of the catalytic trimer. This is Long tail fiber protein Gp37 (37) from Escherichia coli (Bacteriophage Ox2).